The chain runs to 438 residues: Envelope glycoprotein M (438 aa).

Residues 1–13 are Intravirion-facing; sequence MAGSAQPAAVHWR. Residues 14–34 traverse the membrane as a helical segment; it reads LWLAQVGVFAGLALLLLITLI. Topologically, residues 35–88 are virion surface; sequence GAASPGAGLPCFYAAIVNYNARNLSADGGAWAQRELGARHPALFLETPTTAAFS. A helical membrane pass occupies residues 89 to 109; sequence AYTAVVLLAVAAFDVAAAIII. Residues 110 to 132 are Intravirion-facing; that stretch reads RRENSGGFAAAYHMNALATLATP. Residues 133 to 153 form a helical membrane-spanning segment; the sequence is PGALLLGALAAWTLQAAVLLL. The Virion surface portion of the chain corresponds to 154–158; it reads SHKIM. Residues 159-179 traverse the membrane as a helical segment; sequence VLAAATYLAHLAPPAAFVGLF. The Intravirion segment spans residues 180–212; sequence CTAGLPGAEYAQAVHALRERSPRAHRLLGPGRA. A helical membrane pass occupies residues 213 to 233; the sequence is VMINLAGGLLALIIGTAPLML. The Virion surface portion of the chain corresponds to 234 to 248; sequence GQLLGAGLGLSLAQT. A helical membrane pass occupies residues 249–269; it reads VVAGVTVFCLAAVLFLVLTEL. Over 270-276 the chain is Intravirion; the sequence is VLSRYTQ. The helical transmembrane segment at 277–297 threads the bilayer; the sequence is VLPGPAFGTLVAASCIAVASH. Residues 298–317 lie on the Virion surface side of the membrane; sequence DYFHQLRGVVRTQAPRAAAR. Residues 318–338 form a helical membrane-spanning segment; sequence VKLALAGVALLAVAMLVLRLV. The Intravirion portion of the chain corresponds to 339–438; it reads RACLHHRRKG…PRSPPPAHVK (100 aa). Residues 395 to 438 are disordered; sequence EEAVYEAHAPPRPPTIPLRRPEVPHSRASHPRPPPRSPPPAHVK. Residues 425 to 438 show a composition bias toward pro residues; sequence PRPPPRSPPPAHVK.

This sequence belongs to the herpesviridae glycoprotein M family. In terms of assembly, interacts (via N-terminus) with gN (via N-terminus). The gM-gN heterodimer forms the gCII complex. N-glycosylated. It is not O-glycosylated.

It is found in the virion membrane. The protein resides in the host Golgi apparatus. Its subcellular location is the host trans-Golgi network. It localises to the host endosome membrane. The protein localises to the host nucleus inner membrane. Envelope glycoprotein important for virion assembly and egress. Plays a role in the correct incorporation of gH-gL into virion membrane. Directs the glycoprotein N (gN) to the host trans-Golgi network. The chain is Envelope glycoprotein M from Bovine herpesvirus 1.1 (strain Cooper) (BoHV-1).